The chain runs to 288 residues: MIKLEQICRYVWINGDLIPYQFARIHVLTHSLHYSGSVFEGERAYNGKVFKLKEHTERLIQSAEALGLKVPYSVDEIIKAHEFLITHNNIKDAYIRPLIWCGDESLNITNPALSTNFLIASIPSMPMSCEQGVNLHVSRWRKAMPDSTPVQSKSAAQYNMAITSKKEAKALGYDDALLLDYEGFIAECTTTNIFFVKDTTLYTPIADRFLNGITRKTIIEIAKNLCLEVKEERLKLAQIEYFTGCFVTGTAIEVQNISSIDLGDKKILFEDCKIADLLKKEYLRIVRG.

K153 is modified (N6-(pyridoxal phosphate)lysine).

The protein belongs to the class-IV pyridoxal-phosphate-dependent aminotransferase family. The cofactor is pyridoxal 5'-phosphate.

The catalysed reaction is L-leucine + 2-oxoglutarate = 4-methyl-2-oxopentanoate + L-glutamate. The enzyme catalyses L-isoleucine + 2-oxoglutarate = (S)-3-methyl-2-oxopentanoate + L-glutamate. It catalyses the reaction L-valine + 2-oxoglutarate = 3-methyl-2-oxobutanoate + L-glutamate. The protein operates within amino-acid biosynthesis; L-isoleucine biosynthesis; L-isoleucine from 2-oxobutanoate: step 4/4. It participates in amino-acid biosynthesis; L-leucine biosynthesis; L-leucine from 3-methyl-2-oxobutanoate: step 4/4. It functions in the pathway amino-acid biosynthesis; L-valine biosynthesis; L-valine from pyruvate: step 4/4. Its function is as follows. Acts on leucine, isoleucine and valine. The chain is Probable branched-chain-amino-acid aminotransferase (ilvE) from Rickettsia typhi (strain ATCC VR-144 / Wilmington).